We begin with the raw amino-acid sequence, 330 residues long: Glucokinase (330 aa).

14 to 19 is an ATP binding site; that stretch reads ADIGGT.

Belongs to the bacterial glucokinase family.

Its subcellular location is the cytoplasm. The enzyme catalyses D-glucose + ATP = D-glucose 6-phosphate + ADP + H(+). The polypeptide is Glucokinase (Colwellia psychrerythraea (strain 34H / ATCC BAA-681) (Vibrio psychroerythus)).